The chain runs to 182 residues: MKFLFDLFPIILFFIAYKFGGIYQATIVAMVATIVQILWVYYRHRKIDAMQWVSLIMIMVFGSLTIFLHDSTFILLKPTALYWLFSGVLFVSAQFFNKNWIQVLMGKQITLKPTHAHTVWHQLNLAWSAFFFFMGFLNLYIAFEYSEETWVNFKLFGSTGLLIAFVIAQGFWMSRHIEHPAE.

A run of 5 helical transmembrane segments spans residues 20-42, 55-75, 76-96, 123-143, and 153-173; these read GGIYQATIVAMVATIVQILWVYY, LIMIMVFGSLTIFLHDSTFIL, LKPTALYWLFSGVLFVSAQFF, LNLAWSAFFFFMGFLNLYIAF, and FKLFGSTGLLIAFVIAQGFWM.

Belongs to the YciB family.

The protein localises to the cell inner membrane. Its function is as follows. Plays a role in cell envelope biogenesis, maintenance of cell envelope integrity and membrane homeostasis. The polypeptide is Inner membrane-spanning protein YciB (Polynucleobacter asymbioticus (strain DSM 18221 / CIP 109841 / QLW-P1DMWA-1) (Polynucleobacter necessarius subsp. asymbioticus)).